The following is a 330-amino-acid chain: PDZ and LIM domain protein 4 (330 aa).

One can recognise a PDZ domain in the interval 1–84 (MPHSVTLRGP…HLTLSVSRPE (84 aa)). Residues 104 to 180 (IDPEIQDGSP…DPARGLPRSR (77 aa)) are disordered. A compositionally biased stretch (low complexity) spans 111 to 121 (GSPTTSRRPSG). 4 positions are modified to phosphoserine: serine 112, serine 116, serine 120, and serine 135. Positions 148–163 (NGSSEATLPAQMSTLH) are enriched in polar residues. In terms of domain architecture, LIM zinc-binding spans 253–312 (PECTRCGHGIVGTIVKARDKLYHPECFMCSDCGLNLKQRGYFFLDERLYCESHAKARVKP).

In terms of assembly, homodimer. Interacts with PTPN13. Interacts (via C-terminus only or via combined C-terminus and LIM domain, but not LIM domain only) with PTPN13 (via the second or fourth PDZ domains). Found in a complex with PTPN13 and TRIP6. Interacts (via PDZ domain) with ACTN1 and ACTN2 (via C-terminal SDL residues). Interacts (via PDZ domain) with TRIP6 (via the second LIM domain or via the third LIM domain plus C-terminus). Interacts (via LIM domain) with GRIA1 (via C-terminus); this interaction as well as the interaction with alpha-actinin is required for their colocalization in early endosomes. Interacts with PDLIM1. Forms (via LIM domain) a heterodimer with PDLIM3. Interacts directly with SRC (via kinase domain and to a lesser extent the SH2 domain). Isoform 2 interacts with NQO1. NQO1-stabilized isoform 2 heterodimerizes with isoform 1. Post-translationally, phosphorylated on tyrosine residue(s). Can be dephosphorylated by PTPN13. Found in brain.

It localises to the cytoplasm. It is found in the cytoskeleton. Its subcellular location is the nucleus. The protein localises to the perinuclear region. The protein resides in the cell projection. It localises to the lamellipodium. It is found in the dendritic spine. Its subcellular location is the early endosome membrane. The protein localises to the recycling endosome membrane. The protein resides in the synapse. It localises to the synaptosome. Suppresses SRC activation by recognizing and binding to active SRC and facilitating PTPN13-mediated dephosphorylation of SRC 'Tyr-419' leading to its inactivation. Inactivated SRC dissociates from this protein allowing the initiation of a new SRC inactivation cycle. Involved in reorganization of the actin cytoskeleton. In nonmuscle cells, binds to ACTN1 (alpha-actinin-1), increases the affinity of ACTN1 to F-actin (filamentous actin), and promotes formation of actin stress fibers. Involved in regulation of the synaptic AMPA receptor transport in dendritic spines of hippocampal pyramidal neurons directing the receptors toward an insertion at the postsynaptic membrane. Links endosomal surface-internalized GRIA1-containing AMPA receptors to the alpha-actinin/actin cytoskeleton. Increases AMPA receptor-mediated excitatory postsynaptic currents in neurons. In terms of biological role, involved in reorganization of the actin cytoskeleton and in regulation of cell migration. In response to oxidative stress, binds to NQO1, which stabilizes it and protects it from ubiquitin-independent degradation by the core 20S proteasome. Stabilized protein is able to heterodimerize with isoform 1 changing the subcellular location of it from cytoskeleton and nuclei to cytosol, leading to loss of isoforms 1 ability to induce formation of actin stress fibers. Counteracts the effects produced by isoform 1 on organization of actin cytoskeleton and cell motility to fine-tune actin cytoskeleton rearrangement and to attenuate cell migration. The sequence is that of PDZ and LIM domain protein 4 (PDLIM4) from Homo sapiens (Human).